A 229-amino-acid chain; its full sequence is Heptaprenylglyceryl phosphate synthase (229 aa).

Residues Asp13 and Thr39 each coordinate Mg(2+).

It belongs to the GGGP/HepGP synthase family. Homodimer. It depends on Mg(2+) as a cofactor.

It carries out the reaction sn-glycerol 1-phosphate + all-trans-heptaprenyl diphosphate = 3-heptaprenyl-sn-glycero-1-phosphate + diphosphate. It functions in the pathway membrane lipid metabolism; glycerophospholipid metabolism. In terms of biological role, prenyltransferase that catalyzes in vivo the transfer of the heptaprenyl moiety of heptaprenyl pyrophosphate (HepPP; 35 carbon atoms) to the C3 hydroxyl of sn-glycerol-1-phosphate (G1P), producing heptaprenylglyceryl phosphate (HepGP). This reaction is an ether-bond-formation step in the biosynthesis of archaea-type G1P-based membrane lipids found in Bacillales. In Lysinibacillus sphaericus (strain C3-41), this protein is Heptaprenylglyceryl phosphate synthase.